The primary structure comprises 332 residues: Nucleotide-binding protein RC1_2868 (332 aa).

The disordered stretch occupies residues 1–27 (MTGQPLTMETAAGADAGTGAATHPADG). The segment covering 10-22 (TAAGADAGTGAAT) has biased composition (low complexity). 36-43 (GMSGGGLS) lines the ATP pocket. 82–85 (DSRT) lines the GTP pocket. Basic and acidic residues-rich tracts occupy residues 302–312 (GHRDLDRRHPA) and 322–332 (VASRETPEEHR). Positions 302 to 332 (GHRDLDRRHPAPEPAPPWREVASRETPEEHR) are disordered.

The protein belongs to the RapZ-like family.

Displays ATPase and GTPase activities. The polypeptide is Nucleotide-binding protein RC1_2868 (Rhodospirillum centenum (strain ATCC 51521 / SW)).